Here is a 212-residue protein sequence, read N- to C-terminus: Leucyl/phenylalanyl-tRNA--protein transferase (212 aa).

This sequence belongs to the L/F-transferase family.

The protein resides in the cytoplasm. The catalysed reaction is N-terminal L-lysyl-[protein] + L-leucyl-tRNA(Leu) = N-terminal L-leucyl-L-lysyl-[protein] + tRNA(Leu) + H(+). It catalyses the reaction N-terminal L-arginyl-[protein] + L-leucyl-tRNA(Leu) = N-terminal L-leucyl-L-arginyl-[protein] + tRNA(Leu) + H(+). It carries out the reaction L-phenylalanyl-tRNA(Phe) + an N-terminal L-alpha-aminoacyl-[protein] = an N-terminal L-phenylalanyl-L-alpha-aminoacyl-[protein] + tRNA(Phe). Its function is as follows. Functions in the N-end rule pathway of protein degradation where it conjugates Leu, Phe and, less efficiently, Met from aminoacyl-tRNAs to the N-termini of proteins containing an N-terminal arginine or lysine. The polypeptide is Leucyl/phenylalanyl-tRNA--protein transferase (Jannaschia sp. (strain CCS1)).